Reading from the N-terminus, the 493-residue chain is MENKLTIYNTLSRQKELFVPLHAPHVGMYVCGPTVYGDAHLGHARPAITFDILFRYLTHLGYKVRYVRNITDVGHLEHDADEGEDKIAKKARLEQLEPMEVVQYYLNRYHKAMEALNVLPPSIEPHASGHIIEQIELVEEILKNGYAYESEGSVYFDVAKYNKDHHYGKLSGRNLDDVLNTTRELDGQSEKRNPADFALWKCAQPEHIMRWPSPWSNGFPGWHCECTAMGKKYLGEHFDIHGGGMDLIFPHHECEIAQSVASQGDDMVHYWMHNNMITINGQKMGKSYGNFINLDEFFHGTHKLLTQAYSPMTIRFFILQAHYRSTVDFSNEALQAAEKGLERLTEAVKGLERITPATQTTGIEGVKDLREKCYTAMNDDLNSPIVIAHLFDGARMINTVLDKKATISAEDLEELKSMFHLFMYEILGLKEEAANNEAHEEAYGKVVDMLLEQRMKAKANKDWATSDKIRDELAALGFEVKDTKDGFTWKLNK.

Residue Cys31 coordinates Zn(2+). Residues 33 to 43 carry the 'HIGH' region motif; that stretch reads PTVYGDAHLGH. Residues Cys226, His251, and Glu255 each contribute to the Zn(2+) site. The 'KMSKS' region motif lies at 283 to 287; that stretch reads KMGKS. Lys286 contributes to the ATP binding site.

This sequence belongs to the class-I aminoacyl-tRNA synthetase family. In terms of assembly, monomer. It depends on Zn(2+) as a cofactor.

The protein resides in the cytoplasm. It catalyses the reaction tRNA(Cys) + L-cysteine + ATP = L-cysteinyl-tRNA(Cys) + AMP + diphosphate. The chain is Cysteine--tRNA ligase from Phocaeicola vulgatus (strain ATCC 8482 / DSM 1447 / JCM 5826 / CCUG 4940 / NBRC 14291 / NCTC 11154) (Bacteroides vulgatus).